The chain runs to 525 residues: GMP synthase [glutamine-hydrolyzing] (525 aa).

The Glutamine amidotransferase type-1 domain occupies 8-207; that stretch reads KILILDFGSQ…ALDICGCAAN (200 aa). Cysteine 85 acts as the Nucleophile in catalysis. Active-site residues include histidine 181 and glutamate 183. The 193-residue stretch at 208–400 folds into the GMPS ATP-PPase domain; that stretch reads WKPSSIIEDA…LGLPYNMLYR (193 aa). 235 to 241 contributes to the ATP binding site; the sequence is SGGVDSS.

In terms of assembly, homodimer.

The catalysed reaction is XMP + L-glutamine + ATP + H2O = GMP + L-glutamate + AMP + diphosphate + 2 H(+). Its pathway is purine metabolism; GMP biosynthesis; GMP from XMP (L-Gln route): step 1/1. Its function is as follows. Catalyzes the synthesis of GMP from XMP. The protein is GMP synthase [glutamine-hydrolyzing] of Shewanella sp. (strain MR-7).